The following is a 95-amino-acid chain: Ribonuclease kappa (95 aa).

2 helical membrane passes run 12–32 and 68–88; these read GLII…FFYI and CWIA…QFYM.

It belongs to the RNase K family.

The protein localises to the membrane. Functionally, endoribonuclease. In terms of biological role, (Microbial infection) Required for the initial stages of clathrin-mediated endocytic uptake of a diverse set of flaviviruses, including dengue and West Nile. Not required for clathrin-mediated endocytosis and macropinocytosis. This Drosophila melanogaster (Fruit fly) protein is Ribonuclease kappa.